We begin with the raw amino-acid sequence, 451 residues long: LisH domain-containing protein C1711.05 (451 aa).

Positions 6-38 constitute a LisH domain; sequence MKSKVCPLIYHFLQENGYVKTAQTFLKETGDKD. Residues 59–394 are disordered; the sequence is PYLTTEDVGK…VGDPSQWDFA (336 aa). The span at 73 to 98 shows a compositional bias: basic and acidic residues; that stretch reads KESLEKSNDDSQKISKKGAPPEKAHS. Positions 99-120 are enriched in low complexity; that stretch reads SSEASGSGSSSDESDSSSSESE. A compositionally biased stretch (acidic residues) spans 135 to 145; it reads SESESSSEDSD. Residues 146–174 show a composition bias toward low complexity; it reads SSSSSSDSESESSSEGSDSSSSSSSSESE. The span at 189–199 shows a compositional bias: acidic residues; that stretch reads SESESSSEDSD. The span at 200 to 228 shows a compositional bias: low complexity; that stretch reads SSSSSSDSESESSSEGSDSSSSSSSSESE. Composition is skewed to acidic residues over residues 243–253 and 278–300; these read SESESSSEDSD and DSED…EDSD. Low complexity predominate over residues 301-319; sequence STSSSSDSDSSSSSEDGNS. The segment covering 320-332 has biased composition (polar residues); sequence NTDTTTSGEVSAQ. Residues 333 to 343 show a composition bias toward low complexity; it reads SSTNSTSSEES. The span at 344-365 shows a compositional bias: basic and acidic residues; sequence TSVKDEDSSKIHDKSLKRKHED. Over residues 369–380 the composition is skewed to low complexity; the sequence is STSTKSSRTTKT.

The protein resides in the nucleus. It is found in the nucleolus. The sequence is that of LisH domain-containing protein C1711.05 from Schizosaccharomyces pombe (strain 972 / ATCC 24843) (Fission yeast).